A 663-amino-acid chain; its full sequence is Leishmanolysin-like peptidase (663 aa).

Residue His-246 coordinates Zn(2+). The active site involves Glu-247. Positions 250 and 353 each coordinate Zn(2+).

Belongs to the peptidase M8 family. Requires Zn(2+) as cofactor.

The protein resides in the cytoplasm. Essential for the coordination of mitotic progression, and also plays a role in cell migration. This is Leishmanolysin-like peptidase from Caenorhabditis elegans.